Reading from the N-terminus, the 476-residue chain is MSYAQTKTQSKSGYQAGVKDYRLTYYTPDYTPKDTDLLAAFRMTPQPGVPPEEAGAAVAAESSTGTWTTVWTDLLTDLDRYKGRCYDIEPVPGEDNQYICYVAYPLDLFEEGSVTNVLTSIVGNVFGFKALRALRLEDIRFPVAYIKTFQGPPHGIQVERDKLNKYGRPLLGCTIKPKLGLSAKNYGRAVYECLRGGLDFTKDDENINSAPFQRWRDRFLFVAEAINKAQAETGEIKGHYLNVTAPTCEQMLQRAEYAKELKQPIIMHDYLTAGFTANTTLARWCRDNGILLHIHRAMHAVIDRQKNHGIHFRVLAKALRLSGGDHIHTGTVVGKLEGERGITMGFVDLLRENYIEQDKSRGIYFTQDWASLPGVMAVASGGIHVWHMPALVEIFGDDSVLQFGGGTLGHPWGNAPGATANRVALEAVVQARNEGRNLAREGNDIIREAAKWSPELAVACELWKEIKFEFEAMDTV.

2 residues coordinate substrate: N124 and T174. K176 (proton acceptor) is an active-site residue. Residue K178 coordinates substrate. 3 residues coordinate Mg(2+): K202, D204, and E205. The residue at position 202 (K202) is an N6-carboxylysine. H295 serves as the catalytic Proton acceptor. Residues R296, H328, and S380 each coordinate substrate.

Belongs to the RuBisCO large chain family. Type I subfamily. Heterohexadecamer of 8 large chains and 8 small chains; disulfide-linked. The disulfide link is formed within the large subunit homodimers. Requires Mg(2+) as cofactor. The disulfide bond which can form in the large chain dimeric partners within the hexadecamer appears to be associated with oxidative stress and protein turnover.

Its subcellular location is the carboxysome. The catalysed reaction is 2 (2R)-3-phosphoglycerate + 2 H(+) = D-ribulose 1,5-bisphosphate + CO2 + H2O. The enzyme catalyses D-ribulose 1,5-bisphosphate + O2 = 2-phosphoglycolate + (2R)-3-phosphoglycerate + 2 H(+). RuBisCO catalyzes two reactions: the carboxylation of D-ribulose 1,5-bisphosphate, the primary event in carbon dioxide fixation, as well as the oxidative fragmentation of the pentose substrate in the photorespiration process. Both reactions occur simultaneously and in competition at the same active site. The protein is Ribulose bisphosphate carboxylase large chain of Nostoc punctiforme (strain ATCC 29133 / PCC 73102).